A 397-amino-acid chain; its full sequence is 2-acyl-1-lysophosphatidylinositol acyltransferase (397 aa).

Positions 112-117 (HQIYTD) match the HXXXXD motif motif.

The protein belongs to the 1-acyl-sn-glycerol-3-phosphate acyltransferase family.

The protein localises to the lipid droplet. The enzyme catalyses 1-heptadecanoyl-sn-glycero-3-phosphate + octadecanoyl-CoA = 1-heptadecanoyl-2-octadecanoyl-sn-glycero-3-phosphate + CoA. The catalysed reaction is 1-heptadecanoyl-sn-glycero-3-phosphate + tetradecanoyl-CoA = 1-heptadecanoyl-2-tetradecanoyl-sn-glycero-3-phosphate + CoA. It carries out the reaction 1-heptadecanoyl-sn-glycero-3-phosphate + hexadecanoyl-CoA = 1-heptadecanoyl-2-hexadecanoyl-sn-glycero-3-phosphate + CoA. Its function is as follows. Acyltransferase with lysophosphatidic acid acyltransferase (LPAAT) activity. Fatty acyl substrates include 18:0-acyl-CoA, 16:0-acyl-CoA, 17:0-acyl-CoA and 14:0-acyl-CoA. Responsible for the acyl-CoA-dependent introduction of saturated very long chain fatty acids (VLCFAs) into phosphatidylinositol, transferring saturated FAs with 18 to 26 carbon atoms. Responsible for the incorporation of stearate into phosphatidylinositol. Overexpression has an effect on chromosome stability. Regulates phosphorylation and expression of glycerol-3-phosphate acyltransferase SCT1. The polypeptide is 2-acyl-1-lysophosphatidylinositol acyltransferase (Saccharomyces cerevisiae (strain ATCC 204508 / S288c) (Baker's yeast)).